We begin with the raw amino-acid sequence, 492 residues long: Glycogen synthase 1 (492 aa).

Position 15 (Lys-15) interacts with ADP-alpha-D-glucose.

It belongs to the glycosyltransferase 1 family. Bacterial/plant glycogen synthase subfamily.

The enzyme catalyses [(1-&gt;4)-alpha-D-glucosyl](n) + ADP-alpha-D-glucose = [(1-&gt;4)-alpha-D-glucosyl](n+1) + ADP + H(+). Its pathway is glycan biosynthesis; glycogen biosynthesis. In terms of biological role, synthesizes alpha-1,4-glucan chains using ADP-glucose. This chain is Glycogen synthase 1, found in Trichormus variabilis (strain ATCC 29413 / PCC 7937) (Anabaena variabilis).